Consider the following 280-residue polypeptide: Fasciclin-like arabinogalactan protein 3 (280 aa).

The first 24 residues, 1-24, serve as a signal peptide directing secretion; it reads MGLKVSSSLLCLTILLAVSSIVSA. Residues 25–169 enclose the FAS1 domain; sequence VNITRVLEKY…LSVVQISMPI (145 aa). 3 N-linked (GlcNAc...) asparagine glycosylation sites follow: asparagine 26, asparagine 126, and asparagine 159. The span at 180 to 193 shows a compositional bias: pro residues; the sequence is VPPPPPMSSPPAPS. The interval 180–262 is disordered; it reads VPPPPPMSSP…EPPSSASNTG (83 aa). The span at 219–234 shows a compositional bias: low complexity; it reads APETAPASAPSESDSP. The GPI-anchor amidated serine moiety is linked to residue serine 256. A propeptide spans 257 to 280 (removed in mature form); it reads SASNTGLSFGAVLVLGFVASFVGF.

Belongs to the fasciclin-like AGP family.

Its subcellular location is the cell membrane. In terms of biological role, may be a cell surface adhesion protein. In Arabidopsis thaliana (Mouse-ear cress), this protein is Fasciclin-like arabinogalactan protein 3 (FLA3).